A 159-amino-acid chain; its full sequence is Ribosomal RNA large subunit methyltransferase H (159 aa).

S-adenosyl-L-methionine is bound by residues L76, G108, and 127-132; that span reads FSHMTF.

It belongs to the RNA methyltransferase RlmH family. As to quaternary structure, homodimer.

Its subcellular location is the cytoplasm. It carries out the reaction pseudouridine(1915) in 23S rRNA + S-adenosyl-L-methionine = N(3)-methylpseudouridine(1915) in 23S rRNA + S-adenosyl-L-homocysteine + H(+). In terms of biological role, specifically methylates the pseudouridine at position 1915 (m3Psi1915) in 23S rRNA. The sequence is that of Ribosomal RNA large subunit methyltransferase H from Halothermothrix orenii (strain H 168 / OCM 544 / DSM 9562).